The chain runs to 662 residues: Acetyl-coenzyme A synthetase (662 aa).

Residues 197–200 and threonine 317 contribute to the CoA site; that span reads RKGK. Residues 393 to 395, 417 to 422, aspartate 510, and arginine 525 each bind ATP; these read GEP and DTWWQT. Serine 533 provides a ligand contact to CoA. An ATP-binding site is contributed by arginine 536. Residues histidine 549 and valine 552 each coordinate Mg(2+). An N6-acetyllysine modification is found at lysine 623.

This sequence belongs to the ATP-dependent AMP-binding enzyme family. It depends on Mg(2+) as a cofactor. In terms of processing, acetylated. Deacetylation by the SIR2-homolog deacetylase activates the enzyme.

The catalysed reaction is acetate + ATP + CoA = acetyl-CoA + AMP + diphosphate. Catalyzes the conversion of acetate into acetyl-CoA (AcCoA), an essential intermediate at the junction of anabolic and catabolic pathways. AcsA undergoes a two-step reaction. In the first half reaction, AcsA combines acetate with ATP to form acetyl-adenylate (AcAMP) intermediate. In the second half reaction, it can then transfer the acetyl group from AcAMP to the sulfhydryl group of CoA, forming the product AcCoA. This is Acetyl-coenzyme A synthetase from Helicobacter pylori (strain HPAG1).